The following is a 650-amino-acid chain: Aminopeptidase B (650 aa).

Ala2 carries the post-translational modification N-acetylalanine. Ser7 carries the phosphoserine modification. Gly298–Asn302 serves as a coordination point for substrate. His325 contributes to the Zn(2+) binding site. The active-site Proton acceptor is the Glu326. His329 and Glu348 together coordinate Zn(2+). Residue Lys446 is modified to N6-acetyllysine.

The protein belongs to the peptidase M1 family. Zn(2+) serves as cofactor.

It is found in the secreted. It catalyses the reaction Release of N-terminal Arg and Lys from oligopeptides when P1' is not Pro. Also acts on arylamides of Arg and Lys.. In terms of biological role, exopeptidase which selectively removes arginine and/or lysine residues from the N-terminus of several peptide substrates including Arg(0)-Leu-enkephalin, Arg(0)-Met-enkephalin and Arg(-1)-Lys(0)-somatostatin-14. Can hydrolyze leukotriene A4 (LTA-4) into leukotriene B4 (LTB-4). This Homo sapiens (Human) protein is Aminopeptidase B (RNPEP).